Consider the following 602-residue polypeptide: FAD-binding monooxygenase hmp7 (602 aa).

FAD contacts are provided by residues 108 to 111, 120 to 121, and Tyr126; these read TWYW and DV. 118 to 120 lines the NADP(+) pocket; it reads QCD. NADP(+) contacts are provided by residues 252–258 and 275–276; these read TGATAVQ and RT.

It belongs to the FAD-binding monooxygenase family. The cofactor is FAD.

Its pathway is secondary metabolite biosynthesis. Functionally, FAD-binding monooxygenase; part of the gene cluster that mediates the biosynthesis of hypothemycin, a resorcylic acid lactone (RAL) that irreversibly inhibits a subset of protein kinases with a conserved cysteine in the ATP binding site such as human ERK2. The first step is performed by both PKSs hmp3 and hmp8 and leads to the production of 7',8'-dehydrozearalenol (DHZ). The highly reducing PKS hpm8 synthesizes the reduced hexaketide (7S,11S,2E,8E)-7,11-dihydroxy-dodeca-2,8-dienoate, which is transferred downstream to the non-reducing PKS hpm3. Hpm3 then extends the reduced hexaketide to a nonaketide, after which regioselective cyclization and macrolactonization affords DHZ. The next step is the conversion of DHZ into aigialomycin C and is performed by the O-methyltransferase hmp5, the FAD-binding monooxygenase hmp7, and the cytochrome P450 monooxygenase hmp1. The wide substrate tolerance of the hmp5 and hmp7 implies that the reactions from DHZ to aigialomycin C can occur in any order. The steps from aigialomycin C to hypothemycin are less well established. The FAD-linked oxidoreductase hmp9 presumably catalyzes oxidation of the C-6' hydroxyl to a ketone. The timing of this oxidation is important, since the resulting enone functional group is a Michael acceptor that can react spontaneously with glutathione, an abundant metabolite in fungal cells. The glutathione S-transferase hmp2 catalyzes cis-trans isomerization of the 7',8' double bond with equilibrium favoring the trans isomer. The hpm6-encoded transporter might preferentially pump hypothemycin out of the cell relative to the trans isomer aigialomycin A. The cis-to-trans isomerization may be coupled with C-4' hydroxylation, since all known hypothemycin analogs containing the enone functional group also have hydroxyl groups at both C-4' and C-5'. The polypeptide is FAD-binding monooxygenase hmp7 (Hypomyces subiculosus (Nectria subiculosa)).